A 593-amino-acid polypeptide reads, in one-letter code: Aspartate--tRNA ligase (593 aa).

E180 lines the L-aspartate pocket. The aspartate stretch occupies residues 204 to 207 (QIFK). R226 provides a ligand contact to L-aspartate. ATP contacts are provided by residues 226–228 (RDE) and Q235. H453 is an L-aspartate binding site. E487 provides a ligand contact to ATP. R494 contacts L-aspartate. 539-542 (GLDR) is a binding site for ATP.

It belongs to the class-II aminoacyl-tRNA synthetase family. Type 1 subfamily. As to quaternary structure, homodimer.

It is found in the cytoplasm. The catalysed reaction is tRNA(Asp) + L-aspartate + ATP = L-aspartyl-tRNA(Asp) + AMP + diphosphate. Its function is as follows. Catalyzes the attachment of L-aspartate to tRNA(Asp) in a two-step reaction: L-aspartate is first activated by ATP to form Asp-AMP and then transferred to the acceptor end of tRNA(Asp). The polypeptide is Aspartate--tRNA ligase (Clostridium botulinum (strain ATCC 19397 / Type A)).